The following is a 453-amino-acid chain: DDB1- and CUL4-associated factor 12 (453 aa).

Basic residues predominate over residues 1 to 12; sequence MARKAVSRKRKA. Residues 1–26 are disordered; sequence MARKAVSRKRKAPASPGAGSDAQGQQ. A required for nuclear location and interaction with MOV10 region spans residues 1-38; that stretch reads MARKAVSRKRKAPASPGAGSDAQGQQFGWDHTLHKRKR. The residue at position 15 (Ser15) is a Phosphoserine. WD repeat units lie at residues 138 to 178, 182 to 220, 250 to 289, and 338 to 375; these read QQGC…PVCV, GHKD…LTKS, PDNC…SKLL, and ERGS…FLEE.

This sequence belongs to the WD repeat DCAF12 family. Component of the DCX(DCAF12) E3 ubiquitin ligase complex, at least composed of CUL4 (CUL4A or CUL4B), DDB1, DCAF12 and RBX1.

It is found in the cytoplasm. It localises to the cytoskeleton. Its subcellular location is the microtubule organizing center. The protein resides in the centrosome. The protein localises to the nucleus. It participates in protein modification; protein ubiquitination. Functionally, substrate-recognition component of a DCX (DDB1-CUL4-X-box) E3 ubiquitin-protein ligase complex of the DesCEND (destruction via C-end degrons) pathway, which recognizes a C-degron located at the extreme C terminus of target proteins, leading to their ubiquitination and degradation. The C-degron recognized by the DesCEND pathway is usually a motif of less than ten residues and can be present in full-length proteins, truncated proteins or proteolytically cleaved forms. The DCX(DCAF12) complex specifically recognizes proteins with a diglutamate (Glu-Glu) at the C-terminus, such as MAGEA3, MAGEA6 and CCT5, leading to their ubiquitination and degradation. Ubiquitination of MAGEA3, MAGEA6 by DCX(DCAF12) complex is required for starvation-induced autophagy. Also directly recognizes the C-terminal glutamate-leucine (Glu-Leu) degron as an alternative degron in proteins such as MOV10, leading to their ubiquitination and degradation. Controls the protein level of MOV10 during spermatogenesis and in T cells, especially after their activation. The protein is DDB1- and CUL4-associated factor 12 (DCAF12) of Macaca fascicularis (Crab-eating macaque).